A 63-amino-acid polypeptide reads, in one-letter code: Large ribosomal subunit protein bL33m (63 aa).

Belongs to the bacterial ribosomal protein bL33 family.

The protein resides in the mitochondrion. The chain is Large ribosomal subunit protein bL33m (mrpl33) from Dictyostelium discoideum (Social amoeba).